The sequence spans 145 residues: Bacilliredoxin BrxB (145 aa).

Catalysis depends on nucleophile residues C52 and C54. C52 is subject to S-bacillithiol cysteine disulfide. Residues 52–54 (CGC) carry the CXC active site motif motif. A disulfide bridge connects residues C52 and C54.

This sequence belongs to the bacilliredoxin family. Interacts with BrxC. N-terminal Cys of the CXC active site motif can react with bacillithiol (BSH) to form mixed disulfides. S-bacillithiolation protects Cys residues against overoxidation by acting as a redox switch in response to oxidative stress.

Functionally, S-bacillithiolation is the formation of mixed disulfide bonds between protein thiols and the general thiol reductant bacillithiol (BSH) under oxidative stress. BSH is an equivalent of glutathione (GSH) in Firmicutes. This protein is a dithiol bacilliredoxin, which debacillithiolates (removes BSH) the S-bacillithiolated OhrR (OhrR-SSB) in vitro and in vivo NaOCl-generated S-bacillithiolated MetE (MetE-SSB). Involved in maintaining redox homeostasis in response to disulfide stress conditions. The protein is Bacilliredoxin BrxB of Bacillus subtilis (strain 168).